A 314-amino-acid chain; its full sequence is 2,3-dihydroxyphenylpropionate/2,3-dihydroxicinnamic acid 1,2-dioxygenase (314 aa).

Residue His-115 is the Proton donor of the active site. His-179 serves as the catalytic Proton acceptor.

This sequence belongs to the LigB/MhpB extradiol dioxygenase family. As to quaternary structure, homotetramer. The cofactor is Fe(2+).

The catalysed reaction is 3-(2,3-dihydroxyphenyl)propanoate + O2 = (2Z,4E)-2-hydroxy-6-oxonona-2,4-dienedioate + H(+). It carries out the reaction (2E)-3-(2,3-dihydroxyphenyl)prop-2-enoate + O2 = (2Z,4E,7E)-2-hydroxy-6-oxonona-2,4,7-trienedioate + H(+). Its pathway is aromatic compound metabolism; 3-phenylpropanoate degradation. In terms of biological role, catalyzes the non-heme iron(II)-dependent oxidative cleavage of 2,3-dihydroxyphenylpropionic acid and 2,3-dihydroxicinnamic acid into 2-hydroxy-6-ketononadienedioate and 2-hydroxy-6-ketononatrienedioate, respectively. This is 2,3-dihydroxyphenylpropionate/2,3-dihydroxicinnamic acid 1,2-dioxygenase from Escherichia coli O157:H7.